A 3336-amino-acid chain; its full sequence is Pericentrin (3336 aa).

Disordered regions lie at residues 1-71 (MEVE…DICK) and 81-100 (GAGGAFAAQPEDCDGEKRED). Over residues 27-37 (TKGDSSHSEKK) the composition is skewed to basic and acidic residues. Position 44 is a phosphoserine (Ser44). Position 188 is a phosphoserine (Ser188). At Thr191 the chain carries Phosphothreonine. The stretch at 258–553 (HTAQLELTQA…RLQGAREDAL (296 aa)) forms a coiled coil. The segment at 569–589 (KPEKGRKDHVDELEPERHKES) is disordered. A phosphoserine mark is found at Ser610 and Ser682. Coiled coils occupy residues 675 to 835 (TEHK…DALH) and 1010 to 1146 (TILT…MLKA). Position 1245 is a phosphoserine (Ser1245). Residues 1299–1949 (NEETAQVVRK…FLRCQVELDR (651 aa)) adopt a coiled-coil conformation. The tract at residues 1619-1638 (TLDAGRCPEPPSGSPPEGPE) is disordered. The span at 1626-1636 (PEPPSGSPPEG) shows a compositional bias: pro residues. Phosphoserine occurs at positions 1653 and 1712. Residues 1954–1974 (RATAHTRVPGAHPQPRMDGGA) form a disordered region. Ser2044 carries the post-translational modification Phosphoserine. Residues 2064-2082 (VDLVAQVKQLQEKLNRLLY) are a coiled coil. Residues 2168–2214 (SLIPDEMPDSPIQEKSECQDMSLSSPTSVLGGSRHQSHTAEAGPRKS) form a disordered region. Phosphoserine is present on residues Ser2177, Ser2192, Ser2225, Ser2226, and Ser2327. Positions 2186–2197 (QDMSLSSPTSVL) are enriched in polar residues. Positions 2318 to 2374 (SFDSQETLSSPPPGLEGKADRSEKSDGSGFGARLSPGSGGPEAQTAGPVTPASISGR) are disordered. Positions 2334-2343 (GKADRSEKSD) are enriched in basic and acidic residues. Phosphoserine occurs at positions 2352, 2355, 2477, and 2486. The stretch at 2536–3086 (QEKLQHLRTA…EKLLKHHLQK (551 aa)) forms a coiled coil. Disordered regions lie at residues 2875–2910 (LEQSHPRLKEQEGRKAARRSAEARQSPAAAEQWRKW) and 3084–3126 (LQKG…EEAH). 2 stretches are compositionally biased toward basic and acidic residues: residues 2876 to 2896 (EQSHPRLKEQEGRKAARRSAE) and 3092 to 3102 (RSERSAWKPDE). The tract at residues 2983 to 3246 (LSAARLLTSF…ARQPQSPPRT (264 aa)) is interaction with NEK2. The tract at residues 3195–3208 (RFRTAVRVVIAILR) is calmodulin-binding. Positions 3224–3300 (ALAQGKAPRP…RSLTASQDPE (77 aa)) are disordered. Low complexity predominate over residues 3226-3240 (AQGKAPRPGPRARQP). Polar residues predominate over residues 3283-3297 (PSPNSRLERSLTASQ). At Ser3302 the chain carries Phosphoserine.

Interacts with CHD3. Interacts with CHD4; the interaction regulates centrosome integrity. Interacts with DISC1 and PCM1. Binds calmodulin. Interacts with CDK5RAP2; the interaction is leading to centrosomal localization of PCNT and CDK5RAP2. Interacts with isoform 1 of NEK2. Interacts with CEP131. Interacts with CCDC13. Interacts with CEP68. Interacts with ATF5; the ATF5:PCNT:polyglutamylated tubulin (PGT) tripartite unites the mother centriole and the pericentriolar material (PCM) in the centrosome. Cleaved during mitotis which leads to removal of CDK5RAP2 from the centrosome and promotes centriole disengagement and subsequent centriole separation. The C-terminal fragment is rapidly degraded following cleavage. In terms of processing, ubiquitinated by TRIM43; leading to proteasomal degradation. In terms of tissue distribution, expressed in all tissues tested, including placenta, liver, kidney and thymus.

It localises to the cytoplasm. The protein resides in the cytoskeleton. It is found in the microtubule organizing center. The protein localises to the centrosome. In terms of biological role, integral component of the filamentous matrix of the centrosome involved in the initial establishment of organized microtubule arrays in both mitosis and meiosis. Plays a role, together with DISC1, in the microtubule network formation. Is an integral component of the pericentriolar material (PCM). May play an important role in preventing premature centrosome splitting during interphase by inhibiting NEK2 kinase activity at the centrosome. This Homo sapiens (Human) protein is Pericentrin (PCNT).